Consider the following 208-residue polypeptide: Probable adenylyl-sulfate kinase (208 aa).

38–45 is an ATP binding site; that stretch reads GLSGSGKS. The Phosphoserine intermediate role is filled by S112.

It belongs to the APS kinase family.

It catalyses the reaction adenosine 5'-phosphosulfate + ATP = 3'-phosphoadenylyl sulfate + ADP + H(+). Its pathway is sulfur metabolism; hydrogen sulfide biosynthesis; sulfite from sulfate: step 2/3. Its function is as follows. Catalyzes the synthesis of activated sulfate. The polypeptide is Probable adenylyl-sulfate kinase (Halalkalibacterium halodurans (strain ATCC BAA-125 / DSM 18197 / FERM 7344 / JCM 9153 / C-125) (Bacillus halodurans)).